Consider the following 722-residue polypeptide: MDGSQGSTDYGDHVVLRYGGTREMVPLIRHEQMLDMLMERARQIVQGFGNLDTRNMYLFRHEYNSPTLLYPITSASQITSGSILEIILVDRTEAAVIPHVVEPESYMRPTFCDFCGEMLTGLMRQGVKCKNCNGNFHKRCSNAARNNCGAPGAPGAQPSRPPILPPIPTTPTGFPVAALSTPTGLPHTLIEHSYRQFTVCKVCDHLLVGLVKQGLKCRDCGVNVHRKCAMELASNCVLSENAISRVNFTDPEGPGSSSSDNIPLFRLPGQVGTRATEKKKLEGWMMHFILSDPERRLKHYWMMQSNAIHLYNEYSEGIGVNPNRVYRIIPLAEITSVVQNNGKSVLAKHPPHCFEIRTTTNTVFCVGEDYHAFSGGPPKKIPRSMSVRPSSNTTMWFQFIKESLQPPSRNEDNAEQALEFANLYQVLSDKTLGSGQFGTVYSAIQRHSGKEVAVKVISKERFSKKGSGAESMRAEVAILQQTCHPGIVCLEFMCETKDKIFVVMEKMNGDMLEMILSQELGRLNSRATKFLLVQILCALKYLHDQGIAHCDLKPENVLLSDMGSNFPQTKICDFGYARFIPESQFRKTVVGTPAYLPPEVLQRKGYNKSLDMWSVGVIIYVTLSGTFPFNEGEEISEQIQNASFMFPTEPWSEVEPLAVDLIQKLLKVEIEARMSIEQCLDHGWLKGEQLYRDLRDLEVRLNTPRYLTSPQDDILYGTLVNP.

2 Phorbol-ester/DAG-type zinc fingers span residues 98-148 (PHVV…RNNC) and 186-236 (PHTL…ASNC). One can recognise a PH domain in the interval 279-407 (KKLEGWMMHF…QFIKESLQPP (129 aa)). One can recognise a Protein kinase domain in the interval 426 to 685 (VLSDKTLGSG…IEQCLDHGWL (260 aa)). ATP-binding positions include 432-440 (LGSGQFGTV) and Lys-455. Residue Asp-551 is the Proton acceptor of the active site. Residue Thr-588 is modified to Phosphothreonine.

This sequence belongs to the protein kinase superfamily. CAMK Ser/Thr protein kinase family. PKD subfamily. It depends on Mg(2+) as a cofactor. In terms of processing, prolonged phosphorylation at Thr-588 results in ubiquitination and degradation. As to expression, highly expressed in embryos and at lower levels through the four larval stages in adults. Present in a region bounded by the anterior and posterior bulbs of the pharynx and an area of the tail containing the lumbar, dorsorectal and pre-anal ganglia. Expressed in neurons.

The protein localises to the cytoplasm. The protein resides in the membrane. It catalyses the reaction L-seryl-[protein] + ATP = O-phospho-L-seryl-[protein] + ADP + H(+). The enzyme catalyses L-threonyl-[protein] + ATP = O-phospho-L-threonyl-[protein] + ADP + H(+). Its activity is regulated as follows. Activated by DAG and phorbol esters. Phorbol-ester/DAG-type domain 1 binds phorbol ester with high affinity and mediates accumulation at the cell periphery. Phorbol-ester/DAG-type domain 2 binds phorbol ester with low affinity but may mediate initial contact, resulting in a conformational change allowing previously occluded domain 1 to anchor the kinase. Phosphorylation on Thr-588 is then also required for activation and may also result in a further conformational change. Functionally, converts transient diacylglycerol (DAG) signals into prolonged physiological effects, independently of PKC. Role in the regulation of growth and neuromuscular control of movement. Involved in immune response to S.aureus bacterium by activating transcription factor hlh-30 downstream of phospholipase plc-1. The chain is Serine/threonine-protein kinase dkf-1 (dkf-1) from Caenorhabditis elegans.